Reading from the N-terminus, the 160-residue chain is V-type proton ATPase subunit c (160 aa).

Over 1 to 6 the chain is Lumenal; sequence MSDLCP. Residues 7–27 traverse the membrane as a helical segment; sequence VYAPFFGSIGCAAAIVFTCFG. The Cytoplasmic portion of the chain corresponds to 28–53; sequence ASYGTAKSGVGICATSVTRPDLLVKN. Residues 54–74 traverse the membrane as a helical segment; the sequence is VVPVVMAGIIAIYGLVVSVLV. The Lumenal segment spans residues 75–90; sequence SDSLSQKQALYTGFIQ. Residues 91–111 traverse the membrane as a helical segment; sequence LGAGLSVGLSGLAAGFAIGIV. The Cytoplasmic segment spans residues 112-129; sequence GDAGVRGTAQQPRLFVGM. The helical transmembrane segment at 130-150 threads the bilayer; the sequence is ILILIFAEVLGLYGLIVALLL. Over 151–160 the chain is Lumenal; that stretch reads NSRASQDVTC.

This sequence belongs to the V-ATPase proteolipid subunit family. V-ATPase is a heteromultimeric enzyme composed of a peripheral catalytic V1 complex (components A to H) attached to an integral membrane V0 proton pore complex (components: a, c, c', c'', d, e, f and VOA1). The decameric c-ring forms the proton-conducting pore, and is composed of eight proteolipid subunits c, one subunit c' and one subunit c''.

The protein resides in the vacuole membrane. Its function is as follows. Proton-conducting pore forming subunit of the V0 complex of vacuolar(H+)-ATPase (V-ATPase), a multisubunit enzyme composed of a peripheral complex (V1) that hydrolyzes ATP and a membrane integral complex (V0) that translocates protons. V-ATPase is responsible for acidifying and maintaining the pH of intracellular compartments. The polypeptide is V-type proton ATPase subunit c (VMA3) (Candida tropicalis (Yeast)).